The primary structure comprises 323 residues: Leukocyte surface antigen CD47 (323 aa).

A signal peptide spans 1–18; that stretch reads MWPLVAALLLGSACCGSA. Gln-19 carries the pyrrolidone carboxylic acid modification. In terms of domain architecture, Ig-like V-type spans 19 to 127; the sequence is QLLFNKTKSV…ELTREGETII (109 aa). Residues 19–141 are Extracellular-facing; the sequence is QLLFNKTKSV…RVVSWFSPNE (123 aa). N-linked (GlcNAc...) asparagine glycans are attached at residues Asn-23, Asn-34, Asn-50, and Asn-73. 2 cysteine pairs are disulfide-bonded: Cys-33–Cys-263 and Cys-41–Cys-114. Ser-89 is modified (phosphoserine). Asn-111 carries an N-linked (GlcNAc...) asparagine glycan. Residues 142–162 form a helical membrane-spanning segment; it reads NILIVIFPIFAILLFWGQFGI. Residues 163 to 176 lie on the Cytoplasmic side of the membrane; sequence KTLKYRSGGMDEKT. The chain crosses the membrane as a helical span at residues 177 to 197; it reads IALLVAGLVITVIVIVGAILF. Residues 198 to 207 lie on the Extracellular side of the membrane; it reads VPGEYSLKNA. Asn-206 carries N-linked (GlcNAc...) asparagine glycosylation. Residues 208 to 228 form a helical membrane-spanning segment; that stretch reads TGLGLIVTSTGILILLHYYVF. The Cytoplasmic portion of the chain corresponds to 229–235; the sequence is STAIGLT. The helical transmembrane segment at 236–256 threads the bilayer; the sequence is SFVIAILVIQVIAYILAVVGL. The Extracellular portion of the chain corresponds to 257 to 268; it reads SLCIAACIPMHG. Residues 269–289 form a helical membrane-spanning segment; sequence PLLISGLSILALAQLLGLVYM. Over 290 to 323 the chain is Cytoplasmic; sequence KFVASNQKTIQPPRKAVEEPLNAFKESKGMMNDE.

In terms of assembly, monomer. Interacts with THBS1 (via the C-terminal domain). Interacts with SIRPA. Interacts with FAS/CD95; interaction may be enhanced by functional activation. Interacts with SIRPG, UBQLN1 and UBQLN2. May interact with fibrinogen. Interacts with Aedes aegypti neutrophil-stimulating factor 1; the interaction results in inhibition of phagocytosis activity of macrophages. In terms of tissue distribution, very broadly distributed on normal adult tissues, as well as ovarian tumors, being especially abundant in some epithelia and the brain. Macrophages.

Its subcellular location is the cell membrane. Functionally, adhesive protein that mediates cell-to-cell interactions. Acts as a receptor for thrombospondin THBS1 and as modulator of integrin signaling through the activation of heterotrimeric G proteins. Involved in signal transduction, cardiovascular homeostasis, inflammation, apoptosis, angiogenesis, cellular self-renewal, and immunoregulation. Plays a role in modulating pulmonary endothelin EDN1 signaling. Modulates nitrous oxide (NO) signaling, in response to THBS1, hence playing a role as a pressor agent, supporting blood pressure. Plays an important role in memory formation and synaptic plasticity in the hippocampus. Receptor for SIRPA, binding to which prevents maturation of immature dendritic cells and inhibits cytokine production by mature dendritic cells. Interaction with SIRPG mediates cell-cell adhesion, enhances superantigen-dependent T-cell-mediated proliferation and costimulates T-cell activation. Positively modulates FAS-dependent apoptosis in T-cells, perhaps by enhancing FAS clustering. Plays a role in suppressing angiogenesis and may be involved in metabolic dysregulation during normal aging. In response to THBS1, negatively modulates wound healing. Inhibits stem cell self-renewal, in response to THBS1, probably by regulation of the stem cell transcription factors POU5F1/OCT4, SOX2, MYC/c-Myc and KLF4. May play a role in membrane transport and/or integrin dependent signal transduction. May prevent premature elimination of red blood cells. The chain is Leukocyte surface antigen CD47 (CD47) from Homo sapiens (Human).